The following is a 250-amino-acid chain: Phosphoribosylaminoimidazole-succinocarboxamide synthase (250 aa).

This sequence belongs to the SAICAR synthetase family.

The catalysed reaction is 5-amino-1-(5-phospho-D-ribosyl)imidazole-4-carboxylate + L-aspartate + ATP = (2S)-2-[5-amino-1-(5-phospho-beta-D-ribosyl)imidazole-4-carboxamido]succinate + ADP + phosphate + 2 H(+). It functions in the pathway purine metabolism; IMP biosynthesis via de novo pathway; 5-amino-1-(5-phospho-D-ribosyl)imidazole-4-carboxamide from 5-amino-1-(5-phospho-D-ribosyl)imidazole-4-carboxylate: step 1/2. The protein is Phosphoribosylaminoimidazole-succinocarboxamide synthase of Bifidobacterium longum (strain DJO10A).